Consider the following 445-residue polypeptide: uncharacterized protein (445 aa).

His-66 is a Zn(2+) binding site. The active-site Proton acceptor is the Glu-69. The Zn(2+) site is built by His-70 and Glu-146. Positions 232–251 (GRQSAPPRKSTGRINGGPAL) are disordered.

Belongs to the peptidase M16 family. It depends on Zn(2+) as a cofactor.

This is an uncharacterized protein from Mycobacterium leprae (strain TN).